The primary structure comprises 368 residues: Peptidoglycan-recognition protein LA (368 aa).

The Cytoplasmic segment spans residues 1-127 (MFEENNSPTT…KSPSRRVTRN (127 aa)). Disordered regions lie at residues 21-46 (QRAS…GLPL) and 101-122 (INSN…SPSR). Composition is skewed to low complexity over residues 33–43 (TSAGSSTSSSG) and 102–113 (NSNNANGNGNAN). Residues 128 to 148 (TILLITLILLVLATGLIVLYV) form a helical membrane-spanning segment. Over 149-368 (ELNRPKPELP…MKTESWDAKQ (220 aa)) the chain is Extracellular. The cysteines at positions 221 and 227 are disulfide-linked. Residues 233–320 (TIQDSAIAEK…DVDYKLVAQN (88 aa)) form the N-acetylmuramoyl-L-alanine amidase domain. N-linked (GlcNAc...) asparagine glycosylation is found at Asn-273 and Asn-320.

Belongs to the N-acetylmuramoyl-L-alanine amidase 2 family. In terms of tissue distribution, expressed in uninduced hemocytes and mbn-2 cells.

Its subcellular location is the cell membrane. In terms of biological role, peptidoglycan-recognition protein probably involved in innate immunity by binding to peptidoglycans (PGN) of bacteria and activating the immune response. This Drosophila melanogaster (Fruit fly) protein is Peptidoglycan-recognition protein LA (PGRP-LA).